A 514-amino-acid chain; its full sequence is 5'-AMP-activated protein kinase subunit gamma-3 (514 aa).

2 disordered regions span residues 1–121 and 134–155; these read MELA…FPKA and DNPP…SDSN. Positions 59-71 are enriched in polar residues; sequence SRSWPSRAVTTSS. CBS domains are found at residues 222–283, 305–363, and 380–440; these read MATS…RSPL, CFKP…GTLL, and TFRD…HLDM. ADP is bound by residues Arg250, 265-270, Val310, 331-332, and Lys350; these read MLTITD and HR. AMP is bound by residues Arg250, 265 to 270, Val310, His331, 331 to 332, Lys350, Thr380, Ala385, 406 to 407, 422 to 425, Arg449, Leu457, His478, 478 to 479, and 494 to 497; these read MLTITD, HR, SA, SRFD, and SLSD. Residues Arg250, 265–270, Val310, 331–332, Arg332, and Lys350 contribute to the ATP site; these read MLTITD and HR. An AMPK pseudosubstrate motif is present at residues 318–339; sequence LFEAVYALIKNRIHRLPVLDPV. ADP contacts are provided by residues 422 to 425, Arg449, Leu457, and 478 to 479; these read SRFD and HR. ATP is bound by residues 422–425, Arg449, Leu457, and 478–479; these read SRFD and HR. A CBS 4 domain is found at 452-511; the sequence is CLEGVLSCQPHETLGEVIDRIVREQVHRLVLVDETQHLLGVVSLSDILQALVLSPAGIDA.

It belongs to the 5'-AMP-activated protein kinase gamma subunit family. AMPK is a heterotrimer of an alpha catalytic subunit (PRKAA1 or PRKAA2), a beta (PRKAB1 or PRKAB2) and a gamma non-catalytic subunits (PRKAG1, PRKAG2 or PRKAG3). Interacts with FNIP1 and FNIP2. In terms of processing, phosphorylated by ULK1; leading to negatively regulate AMPK activity and suggesting the existence of a regulatory feedback loop between ULK1 and AMPK. Glycosylated; O-GlcNAcylated by OGT, promoting the AMP-activated protein kinase (AMPK) activity. In terms of tissue distribution, muscle.

Functionally, AMP/ATP-binding subunit of AMP-activated protein kinase (AMPK), an energy sensor protein kinase that plays a key role in regulating cellular energy metabolism. In response to reduction of intracellular ATP levels, AMPK activates energy-producing pathways and inhibits energy-consuming processes: inhibits protein, carbohydrate and lipid biosynthesis, as well as cell growth and proliferation. AMPK acts via direct phosphorylation of metabolic enzymes, and by longer-term effects via phosphorylation of transcription regulators. AMPK also acts as a regulator of cellular polarity by remodeling the actin cytoskeleton; probably by indirectly activating myosin. The AMPK gamma3 subunit is a non-catalytic subunit with a regulatory role in muscle energy metabolism. It mediates binding to AMP, ADP and ATP, leading to AMPK activation or inhibition: AMP-binding results in allosteric activation of alpha catalytic subunit (PRKAA1 or PRKAA2) both by inducing phosphorylation and preventing dephosphorylation of catalytic subunits. ADP also stimulates phosphorylation, without stimulating already phosphorylated catalytic subunit. ATP promotes dephosphorylation of catalytic subunit, rendering the AMPK enzyme inactive. This is 5'-AMP-activated protein kinase subunit gamma-3 (PRKAG3) from Sus scrofa (Pig).